The primary structure comprises 622 residues: MACYIYQLPSWVLDDLCRNIDTLSEWDWMQFASYVITDLTQLRKIKSMERVQGVSITRELLWWWSMRQATVQQLVDLLCHLELYRAAQIVLSWKPVPESTSPLPAFPEAVKPGAVATSRRNLKDEQEKVRPVKPRSLLDTGPIMAGAQRQRPCEMDAPCSLKTDAPDSPQSKYCSTSTSAPKQERLLGLPGDRLFWSEADVVQATEDFDQSHRISEGTFADIYQGQRNGVAFAFKKLREVAGSSPGSMDRFLQAEMQLCLRCCHANVLPLLGFCTGRQFHSLIYPYMANGSLHDRLWAQGNSDMLPWPQRASICSGLLLAVEHLHSLDIIHSNVKSANVLLDQHLNPKLAHPVAHPHPDNKKTKYTVMRTHLFQASAAYLPEHFIRVGQLTKQVDIFSCGIVLAEVLTGIPAMDKDRSPVYLKDLLLSEIPNSTSSVCSRKTSMGKAVVKEICQRHVEKRAGLLPEACEEAWATAVSVCLRRRNASVEEARVSLAGVEEQLRGQLSLPWSRVSEATGSSSNTPEETDDVDNSSLSVPSLVMMASCPGAASSPLFTGHGAAQPSTSGRQEADSSSEACTGPQTPQNATETSWKIEINEAKRRLMENIVLYKEERLDSSELFGP.

Residues Leu13 to Lys94 enclose the Death domain. The Protein kinase domain occupies Phe208–Ala473. ATP is bound by residues Ile214–Ile222, Lys235, and Lys335–Asn338. Disordered regions lie at residues Arg511–Ser532 and Leu553–Trp591. 2 stretches are compositionally biased toward polar residues: residues Ser513–Pro523 and Gln561–Ser590.

It belongs to the protein kinase superfamily. TKL Ser/Thr protein kinase family. Pelle subfamily. As to quaternary structure, interacts with MYD88. IL-1 stimulation leads to the formation of a signaling complex which dissociates from the IL-1 receptor following the binding of PELI1. As to expression, ubiquitously expressed, with a higher expression observed in brain, spleen and liver. Isoform 1 and isoform 2 are considered agonist and isoform 3 and isoform 4 are considered antagonist.

In terms of biological role, binds to the IL-1 type I receptor following IL-1 engagement, triggering intracellular signaling cascades leading to transcriptional up-regulation and mRNA stabilization. This is Interleukin-1 receptor-associated kinase-like 2 (Irak2) from Mus musculus (Mouse).